An 81-amino-acid chain; its full sequence is Small ribosomal subunit protein bS16 (81 aa).

This sequence belongs to the bacterial ribosomal protein bS16 family.

The polypeptide is Small ribosomal subunit protein bS16 (Clostridium acetobutylicum (strain ATCC 824 / DSM 792 / JCM 1419 / IAM 19013 / LMG 5710 / NBRC 13948 / NRRL B-527 / VKM B-1787 / 2291 / W)).